The primary structure comprises 1486 residues: Chromosome partition protein MukB (1486 aa).

An ATP-binding site is contributed by 34–41; it reads GGNGAGKS. Coiled coils occupy residues 326 to 418, 444 to 480, and 509 to 603; these read LEAD…QYNQ, LETF…QAYQ, and RHLA…RAPV. Residues 666-783 are flexible hinge; the sequence is PGGSEDQRLN…EVPLFGRAAR (118 aa). Coiled-coil stretches lie at residues 835–923, 977–1115, and 1209–1266; these read EAEI…AKLE, EMLS…TAKA, and VEAI…QNVS.

The protein belongs to the SMC family. MukB subfamily. As to quaternary structure, homodimerization via its hinge domain. Binds to DNA via its C-terminal region. Interacts, and probably forms a ternary complex, with MukE and MukF via its C-terminal region. The complex formation is stimulated by calcium or magnesium. Interacts with tubulin-related protein FtsZ.

The protein resides in the cytoplasm. It localises to the nucleoid. In terms of biological role, plays a central role in chromosome condensation, segregation and cell cycle progression. Functions as a homodimer, which is essential for chromosome partition. Involved in negative DNA supercoiling in vivo, and by this means organize and compact chromosomes. May achieve or facilitate chromosome segregation by condensation DNA from both sides of a centrally located replisome during cell division. This chain is Chromosome partition protein MukB, found in Shigella flexneri serotype 5b (strain 8401).